Here is a 1021-residue protein sequence, read N- to C-terminus: Sodium/potassium-transporting ATPase subunit alpha-1 (1021 aa).

The propeptide occupies 1–5 (MGKGV). The span at 1 to 11 (MGKGVGRDKYE) shows a compositional bias: basic and acidic residues. A disordered region spans residues 1–36 (MGKGVGRDKYEPAAVSEHGDKKKAKKERDMDELKKE). The Cytoplasmic portion of the chain corresponds to 6 to 85 (GRDKYEPAAV…NALTPPPTTP (80 aa)). K9 is subject to N6-acetyllysine. Y10 bears the Phosphotyrosine mark. S16 carries the post-translational modification Phosphoserine; by PKC. Residue K21 is modified to N6-acetyllysine. The segment covering 26 to 36 (KERDMDELKKE) has biased composition (basic and acidic residues). Residues S38 and S45 each carry the phosphoserine modification. A phosphoinositide-3 kinase binding region spans residues 80-82 (PPP). A helical membrane pass occupies residues 86-106 (EWVKFCRQLFGGFSMLLWIGA). The Extracellular segment spans residues 107 to 129 (VLCFLAYGIQAATEEEPQNDNLY). The helical transmembrane segment at 130-150 (LGVVLSAVVIITGCFSYYQEA) threads the bilayer. Residues 151–286 (KSSKIMESFK…GGQTPIAAEI (136 aa)) are Cytoplasmic-facing. S226 bears the Phosphoserine mark. Y258 carries the phosphotyrosine modification. The helical transmembrane segment at 287 to 306 (EHFIHIITGVAVFLGVSFFI) threads the bilayer. The Extracellular segment spans residues 307–318 (LSLILEYTWLEA). Residues 319–336 (VIFLIGIIVANVPEGLLA) form a helical membrane-spanning segment. At 337-770 (TVTVCLTLTA…EEGRLIFDNL (434 aa)) the chain is on the cytoplasmic side. Catalysis depends on D374, which acts as the 4-aspartylphosphate intermediate. A phosphoserine mark is found at S450 and S482. Residue K485 participates in ATP binding. A Phosphotyrosine modification is found at Y540. A mediates interaction with SCN7A region spans residues 594 to 715 (RAAVPDAVGK…QGAIVAVTGD (122 aa)). S666 is subject to Phosphoserine. Positions 715 and 719 each coordinate Mg(2+). A helical transmembrane segment spans residues 771–790 (KKSIAYTLTSNIPEITPFLI). Over 791-800 (FIIANIPLPL) the chain is Extracellular. The chain crosses the membrane as a helical span at residues 801–821 (GTVTILCIDLGTDMVPAISLA). Residues 822–841 (YEQAESDIMKRQPRNPQTDK) lie on the Cytoplasmic side of the membrane. The chain crosses the membrane as a helical span at residues 842–864 (LVNERLISMAYGQIGMIQALGGF). Residues 865–916 (FTYFVIMAENGFLPNHLLGIRVTWDDRWINDVEDSYGQQWTYEQRKIVEFTC) are Extracellular-facing. The helical transmembrane segment at 917–936 (HTAFFVSIVVVQWADLVICK) threads the bilayer. The Cytoplasmic segment spans residues 937–949 (TRRNSVFQQGMKN). The residue at position 941 (S941) is a Phosphoserine; by PKA. Residues 950–968 (KILIFGLFEETALAAFLSY) traverse the membrane as a helical segment. Residues 969–983 (CPGMGVALRMYPLKP) lie on the Extracellular side of the membrane. A helical membrane pass occupies residues 984 to 1004 (TWWFCAFPYSLLIFVYDEVRK). At 1005 to 1021 (LIIRRRPGGWVEKETYY) the chain is on the cytoplasmic side.

It belongs to the cation transport ATPase (P-type) (TC 3.A.3) family. Type IIC subfamily. As to quaternary structure, the sodium/potassium-transporting ATPase is composed of a catalytic alpha subunit, an auxiliary non-catalytic beta subunit and an additional regulatory subunit. Interacts with regulatory subunit FXYD1. Interacts with regulatory subunit FXYD3. Interacts with SIK1. Interacts with SLC35G1 and STIM1. Interacts with CLN3; this interaction regulates the sodium/potassium-transporting ATPase complex localization at the plasma membrane. Interacts with SCN7A; activates ATP1A1 P-type sodium:potassium-exchanging transporter activity which indirectly signals to nearby neurons to regulate sodium homeostasis. Post-translationally, phosphorylation on Tyr-10 modulates pumping activity. Phosphorylation of Ser-941 by PKA modulates the response of ATP1A1 to PKC. Dephosphorylation by protein phosphatase 2A (PP2A) following increases in intracellular sodium, leading to increase catalytic activity.

The protein resides in the cell membrane. It is found in the basolateral cell membrane. Its subcellular location is the sarcolemma. The protein localises to the cell projection. It localises to the axon. The protein resides in the melanosome. The enzyme catalyses K(+)(out) + Na(+)(in) + ATP + H2O = K(+)(in) + Na(+)(out) + ADP + phosphate + H(+). This is the catalytic component of the active enzyme, which catalyzes the hydrolysis of ATP coupled with the exchange of sodium and potassium ions across the plasma membrane. This action creates the electrochemical gradient of sodium and potassium ions, providing the energy for active transport of various nutrients. Could also be part of an osmosensory signaling pathway that senses body-fluid sodium levels and controls salt intake behavior as well as voluntary water intake to regulate sodium homeostasis. In Bos taurus (Bovine), this protein is Sodium/potassium-transporting ATPase subunit alpha-1 (ATP1A1).